The following is a 990-amino-acid chain: Fibronectin-binding protein A (990 aa).

The first 35 residues, 1 to 35 (MKNNLRYGIRKHKLGAASVFLGTMIVVGMGQDKEA), serve as a signal peptide directing secretion. The YSIRK-G/S signaling motif motif lies at 7-18 (YGIRKHKLGAAS). Disordered regions lie at residues 33–61 (KEAATSEQKTTTVEENGNSATDNKVSETQ) and 96–193 (PKAV…TEVK). Polar residues predominate over residues 37–55 (TSEQKTTTVEENGNSATDN). The interval 37 to 511 (TSEQKTTTVE…SNKADGNGKN (475 aa)) is ligand-binding A region. Basic and acidic residues-rich tracts occupy residues 112–126 (TVKEEVVKEEEKPQV) and 179–193 (DVAEAKEASDVTEVK). The tract at residues 194 to 511 (GTDVTSKVTV…SNKADGNGKN (318 aa)) is fibrinogen/elastin/tropoelastin-binding. Residues 512-834 (GQIIQNNDFE…EGQQTIEEDT (323 aa)) form a fibronectin-binding region. Residues 545–574 (ENQDNTPLDIDYHTAIDGEGGYADGYIETI) form a B-1 repeat. Positions 545–604 (ENQDNTPLDIDYHTAIDGEGGYADGYIETIEETDSSAIDIDYHTAVDSEAGHVGGYTESS) are 2 X approximate tandem repeats. The B-2 repeat unit spans residues 575-604 (EETDSSAIDIDYHTAVDSEAGHVGGYTESS). A disordered region spans residues 702 to 969 (LGYEGGQNSG…EESTNKGMLF (268 aa)). The stretch at 707–744 (GQNSGNQSFEEDTEEDKPKYEQGGNIVDIDFDSVPQIQ) is one D-1 repeat. Residues 707–850 (GQNSGNQSFE…TPEVPSEPET (144 aa)) form a 4 X approximate tandem repeats region. The segment covering 741-752 (PQIQGQNNGNQS) has biased composition (polar residues). The stretch at 745 to 782 (GQNNGNQSFEEDTEKDKPKYEQGGNIIDIDFDSVPQIH) is one D-2 repeat. The stretch at 783-821 (GFNKHNEIIEEDTNKDKPNYQFGGHNSVDFEEDTLPKVS) is one D-3 repeat. A compositionally biased stretch (basic and acidic residues) spans 786 to 800 (KHNEIIEEDTNKDKP). The D-4; truncated repeat unit spans residues 822–850 (GQNEGQQTIEEDTTPPTPPTPEVPSEPET). Over residues 836 to 910 (PPTPPTPEVP…PAEPGKPVPP (75 aa)) the composition is skewed to pro residues. WR repeat units lie at residues 851–864 (PTPPTPEVPSEPET), 865–878 (PTPPTPEVPSEPET), 879–892 (PTPPTPEVPSEPET), 893–906 (PTPPTPEVPAEPGK), and 907–920 (PVPPAEEEPKKPSK). The 5 X tandem repeats, Pro-rich (WR) stretch occupies residues 851 to 920 (PTPPTPEVPS…AEEEPKKPSK (70 aa)). The short motif at 954–958 (LPETG) is the LPXTG sorting signal element. T957 carries the pentaglycyl murein peptidoglycan amidated threonine modification. The propeptide at 958–990 (GGEESTNKGMLFGGLFSILGLALLRRNKKNHKA) is removed by sortase.

It is found in the secreted. It localises to the cell wall. In terms of biological role, promotes bacterial attachment to multiple substrates, such as fibronectin (Fn), fibrinogen (Fg), elastin peptides and tropoelastin. This confers to S.aureus the ability to invade endothelial cells. Promotes adherence to and aggregation of activated platelets. This chain is Fibronectin-binding protein A (fnbA), found in Staphylococcus aureus (strain bovine RF122 / ET3-1).